The sequence spans 860 residues: Protein argonaute-2 (860 aa).

Tyr2 is modified (3'-nitrotyrosine). The PAZ domain maps to 230-349 (PVIEFVCEVL…LPLEVCNIVA (120 aa)). Positions 312 to 317 (YFKDRH) are interaction with guide RNA. Ser388 bears the Phosphoserine mark. The Piwi domain occupies 518–819 (LVVVILPGKT…VAFRARYHLV (302 aa)). The interval 525–567 (GKTPVYAEVKRVGDTVLGMATQCVQMKNVQRTTPQTLSNLCLK) is interaction with guide RNA. Positions 588–591 (FQQP) are interaction with GW182 family members. A divalent metal cation is bound at residue Asp598. An interaction with GW182 family members region spans residues 651-661 (LIQFYKSTRFK). Asp670 serves as a coordination point for a divalent metal cation. At Pro701 the chain carries 4-hydroxyproline. 3 interaction with guide RNA regions span residues 710–711 (KR), 754–762 (HAGIQGTSR), and 791–813 (YVRCTRSVSIPAPAYYAHLVAFR). His808 is a binding site for a divalent metal cation. Ser825, Ser829, Ser832, and Ser835 each carry phosphoserine.

This sequence belongs to the argonaute family. Ago subfamily. In terms of assembly, interacts with DICER1 through its Piwi domain and with TARBP2 during assembly of the RNA-induced silencing complex (RISC). Together, DICER1, AGO2 and TARBP2 constitute the trimeric RISC loading complex (RLC), or micro-RNA (miRNA) loading complex (miRLC). Within the RLC/miRLC, DICER1 and TARBP2 are required to process precursor miRNAs (pre-miRNAs) to mature miRNAs and then load them onto AGO2. AGO2 bound to the mature miRNA constitutes the minimal RISC and may subsequently dissociate from DICER1 and TARBP2. Note however that the term RISC has also been used to describe the trimeric RLC/miRLC. The formation of RISC complexes containing siRNAs rather than miRNAs appears to occur independently of DICER1. Interacts with AGO1. Also interacts with DDB1, DDX5, DDX6, DDX20, DHX30, DHX36, DDX47, DHX9, ELAVL, FXR1, GEMIN4, HNRNPF, IGF2BP1, ILF3, IMP8, MATR3, PABPC1, PRMT5, P4HA1, P4HB, RBM4, SART3, TNRC6A, TNRC6B, UPF1 and YBX1. Interacts with the P-body components DCP1A and XRN1. Associates with polysomes and messenger ribonucleoproteins (mNRPs). Interacts with RBM4; the interaction is modulated under stress-induced conditions, occurs under both cell proliferation and differentiation conditions and in an RNA- and phosphorylation-independent manner. Interacts with LIMD1, WTIP and AJUBA. Interacts with TRIM71; the interaction increases in presence of RNA. Interacts with APOBEC3G in an RNA-dependent manner. Interacts with APOBEC3A, APOBEC3C, APOBEC3F and APOBEC3H. Interacts with DICER1, TARBP2, EIF6, MOV10 and RPL7A (60S ribosome subunit); they form a large RNA-induced silencing complex (RISC). Interacts with FMR1. Interacts with ZFP36. Interacts with RC3H1; the interaction is RNA independent. Found in a complex, composed of AGO2, CHD7 and ARB2A. Interacts with SND1 and SYT11. Interacts with CLNK. Interacts with GARRE1. Interacts with GRB2; this interaction is important for the formation of a ternary complex containing GRB2, AGO2 and DICER1. The cofactor is Mg(2+). Requires Mn(2+) as cofactor. In terms of processing, hydroxylated. 4-hydroxylation appears to enhance protein stability but is not required for miRNA-binding or endonuclease activity. Post-translationally, ubiquitinated on surface-exposed lysines by a SCF-like E3 ubiquitin-protein ligase complex containing ZSWIM8 during target-directed microRNA degradation (TDMD), a process that mediates degradation of microRNAs (miRNAs). Ubiquitination by the SCF-like E3 ubiquitin-protein ligase complex containing ZSWIM8 leads to its subsequent degradation, thereby exposing miRNAs for degradation. ZSWIM8 recognizes and binds AGO2 when it is engaged with a TDMD target. Phosphorylation at Ser-388 by AKT3; leads to up-regulate translational repression of microRNA target and down-regulate endonucleolytic cleavage. In terms of processing, a phosphorylation cycle of C-terminal serine cluster (Ser-825-Ser-835) regulates the release of target mRNAs. Target-binding leads to phosphorylation of these residues by CSNK1A1, which reduces the affinity of AGO2 for mRNA and enables target release. The ANKRD52-PPP6C phosphatase complex dephosphorylates the residues, which primes AGO2 for binding a new target.

It is found in the cytoplasm. The protein localises to the P-body. It localises to the nucleus. It carries out the reaction Endonucleolytic cleavage to 5'-phosphomonoester.. Functionally, required for RNA-mediated gene silencing (RNAi) by the RNA-induced silencing complex (RISC). The 'minimal RISC' appears to include AGO2 bound to a short guide RNA such as a microRNA (miRNA) or short interfering RNA (siRNA). These guide RNAs direct RISC to complementary mRNAs that are targets for RISC-mediated gene silencing. The precise mechanism of gene silencing depends on the degree of complementarity between the miRNA or siRNA and its target. Binding of RISC to a perfectly complementary mRNA generally results in silencing due to endonucleolytic cleavage of the mRNA specifically by AGO2. Binding of RISC to a partially complementary mRNA results in silencing through inhibition of translation, and this is independent of endonuclease activity. May inhibit translation initiation by binding to the 7-methylguanosine cap, thereby preventing the recruitment of the translation initiation factor eIF4-E. May also inhibit translation initiation via interaction with EIF6, which itself binds to the 60S ribosomal subunit and prevents its association with the 40S ribosomal subunit. The inhibition of translational initiation leads to the accumulation of the affected mRNA in cytoplasmic processing bodies (P-bodies), where mRNA degradation may subsequently occur. In some cases RISC-mediated translational repression is also observed for miRNAs that perfectly match the 3' untranslated region (3'-UTR). Can also up-regulate the translation of specific mRNAs under certain growth conditions. Binds to the AU element of the 3'-UTR of the TNF (TNF-alpha) mRNA and up-regulates translation under conditions of serum starvation. Also required for transcriptional gene silencing (TGS), in which short RNAs known as antigene RNAs or agRNAs direct the transcriptional repression of complementary promoter regions. The sequence is that of Protein argonaute-2 (Ago2) from Rattus norvegicus (Rat).